The sequence spans 1786 residues: Protein TIC 214 (1786 aa).

The next 6 membrane-spanning stretches (helical) occupy residues 19–39, 68–88, 91–111, 133–153, 176–196, and 227–247; these read IINSVVVVGLYYGFLTTFSIG, FIAGQLMMFISIYYAPLHLAL, PHTITVLALPYLLFHFFWNNH, VFLNNLIFQLFNHFILPSSML, VGWLIGHILFMKWVGLVLVWI, and IFSILLFITCVYYLGRIPSPI. The stretch at 1007–1046 forms a coiled coil; sequence SLSEKKIKNLIDRKKTIRNQIEEISKEKQNLTNSCTKLRY.

Belongs to the TIC214 family. In terms of assembly, part of the Tic complex. Component of the 1-MD complex, composed of TIC20-I, TIC214, TIC100 and TIC56. Interacts with the translocating preproteins. Hydrolysis of ATP is essential for the formation of this complex. The 1-MD complex interacts with TIC21.

It is found in the plastid. The protein resides in the chloroplast inner membrane. Its function is as follows. Involved in protein precursor import into chloroplasts. May be part of an intermediate translocation complex acting as a protein-conducting channel at the inner envelope. The polypeptide is Protein TIC 214 (Arabidopsis thaliana (Mouse-ear cress)).